The primary structure comprises 317 residues: Probable cell division protein WhiA (317 aa).

The H-T-H motif DNA-binding region spans 267–300 (SLKELGEMLHPPVGKSGVNHRLRRLELIARQVRG).

It belongs to the WhiA family.

Its function is as follows. Involved in cell division and chromosome segregation. This Moorella thermoacetica (strain ATCC 39073 / JCM 9320) protein is Probable cell division protein WhiA.